The chain runs to 425 residues: Dipeptidase tcpJ (425 aa).

Zn(2+) contacts are provided by histidine 46, aspartate 48, and glutamate 158. Histidine 185, arginine 259, and aspartate 318 together coordinate substrate.

The protein belongs to the metallo-dependent hydrolases superfamily. Peptidase M19 family. The cofactor is Zn(2+).

The enzyme catalyses an L-aminoacyl-L-amino acid + H2O = 2 an L-alpha-amino acid. In terms of biological role, dipeptidase; part of the gene cluster that mediates the biosynthesis of an unusual class of epipolythiodioxopiperazines (ETPs) lacking the reactive thiol group important for toxicity. Firstly, L-tyrosine is prenylated by tcpD, before undergoing condensation with L-glycine in a reaction catalyzed by the NRPS tcpP leading to the diketopiperazine (DKP) backbone. Afterwards the alpha-carbon of tyrosine is oxidized by the cytochrome P450 tcpC to form a hydroxyl group. However, in contrast other ETP biosynthesis pathways studied so far, tcpC is not able to bishydroxylate the DKP at both alpha-carbon positions, but hydroxylates the alpha-carbon of the tyrosine part and the nitrogen of the glycine part. The next steps involve an alpha,beta-elimination reaction catalyzed by tcpI, a methylation by the methyltransferase tcpN the action of the four enzyme cascade tcpG/K/J/I. Due to a dysfunctional cytochrome P450 monooxygenase tcpC, the pathway leads to the biosynthesis of probable non-toxic metabolites lacking the reactive thiol group. The sequence is that of Dipeptidase tcpJ from Claviceps purpurea (strain 20.1) (Ergot fungus).